We begin with the raw amino-acid sequence, 629 residues long: MALDGLAGYVYKAAAEGRVLTLAALLLHRTEPEIRTLLSTVTQHGGQRSTPLIIAARNGHSKVVRLLLEHYKVDVQQTGTVRFDGYIIDGATALWCAAGAGHYEVVKLLVSHEANVNHTTVTNSTPLRAACFDGRLDIVRFLVENNANISIANKYDNTCLMIAAYKGHSDVVHYLLRQHADPNARAHCGATALHFAAEAGHLDIVRELVKWKAAMVVNGHGMTPLKVAAESCKADVVELLLAHSDCDAKSRIEALELLGASFANDRENYNITKTYQYLYLAMLERFRDPSNILHKEVLPPIEAYGMRTECRNPQELGAILHNTDDLHLEGLIVRERILGSDNIDVSHPIIYRGAVYADNMQFEQCIKLWLHALQLRQKGNRNTHKDLLRFAQVFSQMIHLNEPVKSRDVERVLECSVLEIERGIARIQNPQEPDAHSTLENHECNLYTFLYLVCISTKTCCSEEEQPCINKQIYRLVHLDPRTREGGSLLHLAVDSGTPVDDFHTNDVCSFPSAPVAKLLIDCGANVNAVDQMGNSPLHVIVQYNRPISDFLTLHAIIISLVEAGAHTDMTNKEKKTPLDRSTTGVSEILLKTQMKLSLKCLAARAVRLHNIKYQNQIPRTLEEFVEFH.

ANK repeat units lie at residues 47-77, 89-118, 122-151, 155-184, 188-217, and 220-250; these read QRSTPLIIAARNGHSKVVRLLLEHYKVDVQQ, DGATALWCAAGAGHYEVVKLLVSHEANVNH, TNSTPLRAACFDGRLDIVRFLVENNANISI, YDNTCLMIAAYKGHSDVVHYLLRQHADPNA, CGATALHFAAEAGHLDIVRELVKWKAAMVV, and HGMTPLKVAAESCKADVVELLLAHSDCDAKS. A TPR repeat occupies 346–379; the sequence is SHPIIYRGAVYADNMQFEQCIKLWLHALQLRQKG. ANK repeat units lie at residues 485–529 and 533–570; these read EGGS…NVNA and MGNSPLHVIVQYNRPISDFLTLHAIIISLVEAGAHTDM.

It belongs to the fem-1 family. As to quaternary structure, component of a CRL2 E3 ubiquitin-protein ligase complex, also named ECS (Elongin BC-CUL2/5-SOCS-box protein) complex.

It localises to the cytoplasm. The protein resides in the nucleus. The protein operates within protein modification; protein ubiquitination. In terms of biological role, substrate-recognition component of a Cul2-RING (CRL2) E3 ubiquitin-protein ligase complex of the DesCEND (destruction via C-end degrons) pathway, which recognizes a C-degron located at the extreme C terminus of target proteins, leading to their ubiquitination and degradation. The C-degron recognized by the DesCEND pathway is usually a motif of less than ten residues and can be present in full-length proteins, truncated proteins or proteolytically cleaved forms. The CRL2(FEM1B) complex specifically recognizes proteins ending with -Gly-Leu-Asp-Arg, leading to their ubiquitination and degradation. This chain is Protein fem-1 homolog B, found in Xenopus laevis (African clawed frog).